Consider the following 154-residue polypeptide: Aspartate carbamoyltransferase regulatory chain (154 aa).

Zn(2+) contacts are provided by C109, C114, C138, and C141.

This sequence belongs to the PyrI family. In terms of assembly, contains catalytic and regulatory chains. The cofactor is Zn(2+).

In terms of biological role, involved in allosteric regulation of aspartate carbamoyltransferase. In Methanothrix thermoacetophila (strain DSM 6194 / JCM 14653 / NBRC 101360 / PT) (Methanosaeta thermophila), this protein is Aspartate carbamoyltransferase regulatory chain.